The primary structure comprises 237 residues: Purine nucleoside phosphorylase DeoD-type (237 aa).

His-4 provides a ligand contact to a purine D-ribonucleoside. Phosphate contacts are provided by residues Gly-20, Arg-24, Arg-43, and 87–90 (RVGS). Residues 179–181 (EME) and 203–204 (SD) contribute to the a purine D-ribonucleoside site. Residue Asp-204 is the Proton donor of the active site.

This sequence belongs to the PNP/UDP phosphorylase family. In terms of assembly, homohexamer; trimer of homodimers.

It carries out the reaction a purine D-ribonucleoside + phosphate = a purine nucleobase + alpha-D-ribose 1-phosphate. It catalyses the reaction a purine 2'-deoxy-D-ribonucleoside + phosphate = a purine nucleobase + 2-deoxy-alpha-D-ribose 1-phosphate. In terms of biological role, catalyzes the reversible phosphorolytic breakdown of the N-glycosidic bond in the beta-(deoxy)ribonucleoside molecules, with the formation of the corresponding free purine bases and pentose-1-phosphate. The chain is Purine nucleoside phosphorylase DeoD-type from Dichelobacter nodosus (strain VCS1703A).